A 259-amino-acid polypeptide reads, in one-letter code: Borneol dehydrogenase, mitochondrial (259 aa).

The N-terminal 30 residues, 1 to 30 (MASTVLRRLEGKVALITGAASGIGESAARL), are a transit peptide targeting the mitochondrion. NAD(+) contacts are provided by residues 21 to 23 (SGI), D42, 63 to 64 (DV), and 90 to 92 (NAG). The Proton donor role is filled by S144. 2 residues coordinate substrate: S144 and Y157. NAD(+) is bound by residues Y157, K161, and T192. The active-site Proton acceptor is Y157. K161 serves as the catalytic Proton donor/acceptor.

The protein belongs to the short-chain dehydrogenases/reductases (SDR) family. In terms of tissue distribution, specifically expressed in glandular trichomes of mature flowers.

Its subcellular location is the mitochondrion. The enzyme catalyses borneol + NAD(+) = camphor + NADH + H(+). The protein operates within secondary metabolite biosynthesis; terpenoid biosynthesis. Involved in the biosynthesis of monoterpenes natural products related to camphor. Catalyzes the conversion of borneol into camphor. This chain is Borneol dehydrogenase, mitochondrial, found in Lavandula x intermedia (Lavandin).